Consider the following 135-residue polypeptide: Germinal center-associated signaling and motility-like protein (135 aa).

The interval 1 to 68 is disordered; sequence MGNYLLRKLS…ENGSGSEEVC (68 aa). Over residues 22–48 the composition is skewed to basic and acidic residues; that stretch reads GNPDEERKRQEMTTFERKLQDQDKKSQ. Positions 26 to 50 form a coiled coil; that stretch reads EERKRQEMTTFERKLQDQDKKSQEV. Residues 51 to 66 are compositionally biased toward low complexity; it reads SSTSNQENENGSGSEE.

This Homo sapiens (Human) protein is Germinal center-associated signaling and motility-like protein (GCSAML).